The following is a 671-amino-acid chain: tRNA 5-methylaminomethyl-2-thiouridine biosynthesis bifunctional protein MnmC (671 aa).

A tRNA (mnm(5)s(2)U34)-methyltransferase region spans residues 1-245 (MVNVMNTLSF…KREMLWGEKP (245 aa)). The interval 272-671 (VGGGVASLFV…RKLLKGSKVE (400 aa)) is FAD-dependent cmnm(5)s(2)U34 oxidoreductase.

It in the N-terminal section; belongs to the methyltransferase superfamily. tRNA (mnm(5)s(2)U34)-methyltransferase family. In the C-terminal section; belongs to the DAO family. The cofactor is FAD.

The protein localises to the cytoplasm. The catalysed reaction is 5-aminomethyl-2-thiouridine(34) in tRNA + S-adenosyl-L-methionine = 5-methylaminomethyl-2-thiouridine(34) in tRNA + S-adenosyl-L-homocysteine + H(+). Catalyzes the last two steps in the biosynthesis of 5-methylaminomethyl-2-thiouridine (mnm(5)s(2)U) at the wobble position (U34) in tRNA. Catalyzes the FAD-dependent demodification of cmnm(5)s(2)U34 to nm(5)s(2)U34, followed by the transfer of a methyl group from S-adenosyl-L-methionine to nm(5)s(2)U34, to form mnm(5)s(2)U34. The chain is tRNA 5-methylaminomethyl-2-thiouridine biosynthesis bifunctional protein MnmC from Actinobacillus pleuropneumoniae serotype 5b (strain L20).